Here is a 380-residue protein sequence, read N- to C-terminus: Cytochrome b (380 aa).

A run of 4 helical transmembrane segments spans residues 34-54, 78-99, 114-134, and 179-199; these read FGSL…LLAM, WLIR…YLHI, WNTG…GYVL, and FFAL…IHLT. 2 residues coordinate heme b: His-84 and His-98. Residues His-183 and His-197 each contribute to the heme b site. An a ubiquinone-binding site is contributed by His-202. The next 4 membrane-spanning stretches (helical) occupy residues 227 to 247, 289 to 309, 321 to 341, and 348 to 368; these read LKDT…ALFS, LGGV…PLLH, LSQL…WVGS, and FIII…ILLP.

This sequence belongs to the cytochrome b family. In terms of assembly, the cytochrome bc1 complex contains 11 subunits: 3 respiratory subunits (MT-CYB, CYC1 and UQCRFS1), 2 core proteins (UQCRC1 and UQCRC2) and 6 low-molecular weight proteins (UQCRH/QCR6, UQCRB/QCR7, UQCRQ/QCR8, UQCR10/QCR9, UQCR11/QCR10 and a cleavage product of UQCRFS1). This cytochrome bc1 complex then forms a dimer. It depends on heme b as a cofactor.

It localises to the mitochondrion inner membrane. In terms of biological role, component of the ubiquinol-cytochrome c reductase complex (complex III or cytochrome b-c1 complex) that is part of the mitochondrial respiratory chain. The b-c1 complex mediates electron transfer from ubiquinol to cytochrome c. Contributes to the generation of a proton gradient across the mitochondrial membrane that is then used for ATP synthesis. The chain is Cytochrome b (MT-CYB) from Fregetta tropica (Black-bellied storm-petrel).